We begin with the raw amino-acid sequence, 135 residues long: DNA-binding protein H-NS homolog (135 aa).

A DNA-binding region spans residues Gln112–Ser117.

It belongs to the histone-like protein H-NS family. In terms of assembly, homodimer that oligomerizes on DNA into higher-order complexes that form bridges between disparate regions of DNA compacting it.

It localises to the cytoplasm. The protein resides in the nucleoid. In terms of biological role, a DNA-binding protein implicated in transcriptional repression and chromosome organization and compaction. Binds nucleation sites in AT-rich DNA and bridges them, forming higher-order nucleoprotein complexes and condensing the chromosome. A subset of genes are repressed by H-NS in association with other proteins. In Buchnera aphidicola subsp. Acyrthosiphon pisum (strain APS) (Acyrthosiphon pisum symbiotic bacterium), this protein is DNA-binding protein H-NS homolog (hns).